A 411-amino-acid polypeptide reads, in one-letter code: Kelch domain-containing protein 10 (411 aa).

6 Kelch repeats span residues 72–133 (NLYV…LHGH), 135–186 (LLVF…IIHG), 187–239 (FLYV…HDGQ), 240–288 (RIYV…RRCH), 296–342 (EVFI…AVTP), and 345–388 (CMYI…YFPQ).

Belongs to the KLHDC10 family. As to quaternary structure, component of a CRL2 E3 ubiquitin-protein ligase complex, also named ECS (Elongin BC-CUL2/5-SOCS-box protein) complex, composed of CUL2, Elongin BC (ELOB and ELOC), RBX1 and substrate-specific adapter KLHDC10.

The protein operates within protein modification; protein ubiquitination. Substrate-recognition component of a Cul2-RING (CRL2) E3 ubiquitin-protein ligase complex of the DesCEND (destruction via C-end degrons) pathway, which recognizes a C-degron located at the extreme C terminus of target proteins, leading to their ubiquitination and degradation. The C-degron recognized by the DesCEND pathway is usually a motif of less than ten residues and can be present in full-length proteins, truncated proteins or proteolytically cleaved forms. The CRL2(KLHDC10) complex specifically recognizes proteins with a proline-glycine (Pro-Gly) or an alanine tail (CAT tail) at the C-terminus, leading to their ubiquitination and degradation. The CRL2(KLHDC10) complex is involved in the ribosome-associated quality control (RQC) pathway, which mediates the extraction of incompletely synthesized nascent chains from stalled ribosomes: CRL2(KLHDC10) acts downstream of NEMF and recognizes CAT tails associated with stalled nascent chains, leading to their ubiquitination and degradation. The sequence is that of Kelch domain-containing protein 10 from Xenopus laevis (African clawed frog).